The primary structure comprises 178 residues: dCTP deaminase (178 aa).

DCTP-binding positions include 99–104 (RSTWAR) and D115. The Proton donor/acceptor role is filled by E125. DCTP-binding residues include Y157 and Q164.

Belongs to the dCTP deaminase family. In terms of assembly, homotrimer.

It carries out the reaction dCTP + H2O + H(+) = dUTP + NH4(+). Its pathway is pyrimidine metabolism; dUMP biosynthesis; dUMP from dCTP (dUTP route): step 1/2. Catalyzes the deamination of dCTP to dUTP. In Aeropyrum pernix (strain ATCC 700893 / DSM 11879 / JCM 9820 / NBRC 100138 / K1), this protein is dCTP deaminase.